The sequence spans 152 residues: Peptide deformylase (152 aa).

Positions 88 and 130 each coordinate Fe cation. Glu131 is a catalytic residue. His134 lines the Fe cation pocket.

The protein belongs to the polypeptide deformylase family. The cofactor is Fe(2+).

It catalyses the reaction N-terminal N-formyl-L-methionyl-[peptide] + H2O = N-terminal L-methionyl-[peptide] + formate. Functionally, removes the formyl group from the N-terminal Met of newly synthesized proteins. Requires at least a dipeptide for an efficient rate of reaction. N-terminal L-methionine is a prerequisite for activity but the enzyme has broad specificity at other positions. The protein is Peptide deformylase of Syntrophomonas wolfei subsp. wolfei (strain DSM 2245B / Goettingen).